Reading from the N-terminus, the 1000-residue chain is Chromosome transmission fidelity protein 18 homolog (1000 aa).

Disordered stretches follow at residues 53–89, 130–159, and 272–301; these read SAGD…RDAS, AGNS…DSKF, and EFGE…SHSL. Polar residues predominate over residues 60–70; that stretch reads SNANSKPTGDS. Positions 272–295 are enriched in acidic residues; sequence EFGENDSEILENDDNAGEEDDEDE. 396–403 contacts ATP; sequence GPPGLGKT. Residues 888–898 are compositionally biased toward polar residues; that stretch reads ARNAGRDNTTA. The disordered stretch occupies residues 888–916; that stretch reads ARNAGRDNTTAAAAVKTADPKGAKSAAKP.

It belongs to the activator 1 small subunits family. CTF18 subfamily. In terms of assembly, component of the CTF18-RFC complex, which consists of ctf18, ctf8, dcc1, rfc2, rfc3, rfc4 and rfc5. The CTF18-RFC complex associates with pcna.

Its subcellular location is the nucleus. Its function is as follows. Chromosome cohesion factor involved in sister chromatid cohesion and fidelity of chromosome transmission. Component of one of the cell nuclear antigen loader complexes, CTF18-replication factor C (CTF18-RFC), which consists of ctf18, ctf8, dcc1, rfc2, rfc3, rfc4 and rfc5. The CTF18-RFC complex binds to single-stranded and primed DNAs and has weak ATPase activity that is stimulated by the presence of primed DNA, replication protein A (RPA) and by proliferating cell nuclear antigen (pcna). The CTF18-RFC complex catalyzes the ATP-dependent loading of pcna onto primed and gapped DNA. The protein is Chromosome transmission fidelity protein 18 homolog (chtf18) of Xenopus laevis (African clawed frog).